The primary structure comprises 1535 residues: Lysine-specific demethylase 5D (1535 aa).

The region spanning 14 to 55 (CPVFEPSWAEFQDPLGYIAKIRPIAEKSGICKIRPPADWQPP) is the JmjN domain. In terms of domain architecture, ARID spans 79-169 (TRVKLNYLDQ…IIYPYEMFQS (91 aa)). The segment at 192–227 (PHSIPLRQSVQPSKFSSYSRRAKRLQPDPEPTEEDI) is disordered. Residues 197-210 (LRQSVQPSKFSSYS) are compositionally biased toward polar residues. Glycyl lysine isopeptide (Lys-Gly) (interchain with G-Cter in SUMO2) cross-links involve residues K205, K229, K244, and K272. 2 positions are modified to phosphoserine: S291 and S307. The segment at 314–364 (SYICQVCSRGDEDDKLLFCDGCDDNYHIFCLLPPLPEIPRGIWRCPKCILA) adopts a PHD-type 1 zinc-finger fold. A 2-oxoglutarate-binding site is contributed by Y430. The JmjC domain occupies 458-624 (EYATSGWNLN…AGRQCIEHYR (167 aa)). H504 and E506 together coordinate Fe cation. S512, N514, and K522 together coordinate 2-oxoglutarate. H592 provides a ligand contact to Fe cation. A C5HC2 zinc finger spans residues 697-749 (CIKCKTTCFLSALACYDCPDGLVCLSHINDLCKCSSSRQYLRYRYTLDELPTM). S884 bears the Phosphoserine mark. Residues 1174–1235 (ICVCGQVPAG…DTKFLCPLCM (62 aa)) form a PHD-type 2 zinc finger. Residue S1342 is modified to Phosphoserine. Residues 1425–1519 (HQGSRTRSRA…KDSGSSAACP (95 aa)) are disordered. Basic residues predominate over residues 1428–1441 (SRTRSRALERRRRQ). A compositionally biased stretch (basic and acidic residues) spans 1473–1487 (GREEEHYQEKADREN). Positions 1490-1517 (LTPSTDHSPSLKGNQNSLQHKDSGSSAA) are enriched in polar residues.

This sequence belongs to the JARID1 histone demethylase family. Interacts withPCGF6, MSH5, ZMYND8, AR. It depends on L-ascorbate as a cofactor. The cofactor is Fe(2+).

The protein localises to the nucleus. The enzyme catalyses N(6),N(6),N(6)-trimethyl-L-lysyl(4)-[histone H3] + 3 2-oxoglutarate + 3 O2 = L-lysyl(4)-[histone H3] + 3 formaldehyde + 3 succinate + 3 CO2. Its function is as follows. Histone demethylase that specifically demethylates 'Lys-4' of histone H3, thereby playing a central role in histone code. Does not demethylate histone H3 'Lys-9', H3 'Lys-27', H3 'Lys-36', H3 'Lys-79' or H4 'Lys-20'. Demethylates trimethylated and dimethylated but not monomethylated H3 'Lys-4'. May play a role in spermatogenesis. Involved in transcriptional repression of diverse metastasis-associated genes; in this function seems to cooperate with ZMYND8. Suppresses prostate cancer cell invasion. Regulates androgen receptor (AR) transcriptional activity by demethylating H3K4me3 active transcription marks. This is Lysine-specific demethylase 5D (KDM5D) from Pan troglodytes (Chimpanzee).